Reading from the N-terminus, the 332-residue chain is Formamidase (332 aa).

The 246-residue stretch at 14–259 (FLTALIQYPV…WEIVTAEVYP (246 aa)) folds into the CN hydrolase domain. Glu60 serves as the catalytic Proton acceptor. Lys132 functions as the Proton donor in the catalytic mechanism. The active-site Nucleophile is Cys165.

It belongs to the carbon-nitrogen hydrolase superfamily. Aliphatic amidase family.

It carries out the reaction formamide + H2O = formate + NH4(+). In terms of biological role, is an aliphatic amidase with a restricted substrate specificity, as it only hydrolyzes formamide. The protein is Formamidase of Bacillus cereus (strain B4264).